Here is a 108-residue protein sequence, read N- to C-terminus: Iron-sulfur cluster assembly protein CyaY (108 aa).

Belongs to the frataxin family.

In terms of biological role, involved in iron-sulfur (Fe-S) cluster assembly. May act as a regulator of Fe-S biogenesis. The protein is Iron-sulfur cluster assembly protein CyaY of Pseudomonas aeruginosa (strain ATCC 15692 / DSM 22644 / CIP 104116 / JCM 14847 / LMG 12228 / 1C / PRS 101 / PAO1).